The sequence spans 291 residues: Ecto-ADP-ribosyltransferase 5 (291 aa).

An N-terminal signal peptide occupies residues 1–22 (MALAALMIALGSLGLHTWQAQA). An intrachain disulfide couples cysteine 42 to cysteine 258. The 191-residue stretch at 62 to 252 (ALLRESWEAA…LVTLWSYNQT (191 aa)) folds into the TR mART core domain. Tyrosine 99 is a binding site for NAD(+). N-linked (GlcNAc...) asparagine glycosylation is present at asparagine 101. NAD(+) is bound by residues arginine 160 and glutamine 180. The active site involves arginine 160. Residue serine 183 is part of the active site. A glycan (N-linked (GlcNAc...) asparagine) is linked at asparagine 196. Serine 214 is a binding site for NAD(+). Glutamate 221 is a catalytic residue. N-linked (GlcNAc...) asparagine glycosylation is present at asparagine 250.

It belongs to the Arg-specific ADP-ribosyltransferase family.

It localises to the secreted. It carries out the reaction L-arginyl-[protein] + NAD(+) = N(omega)-(ADP-D-ribosyl)-L-arginyl-[protein] + nicotinamide + H(+). This chain is Ecto-ADP-ribosyltransferase 5 (ART5), found in Homo sapiens (Human).